A 329-amino-acid chain; its full sequence is Aurora kinase B (329 aa).

The span at 1 to 14 (MTLSRAKHANRNHL) shows a compositional bias: basic residues. The tract at residues 1 to 21 (MTLSRAKHANRNHLPHLLAKV) is disordered. In terms of domain architecture, Protein kinase spans 53-305 (FEMGAHLGRG…LVDVMTHYWV (253 aa)). ATP contacts are provided by residues 59–67 (LGRGKFGRV) and K82. The active-site Proton acceptor is D178.

The protein belongs to the protein kinase superfamily. Ser/Thr protein kinase family. Aurora subfamily. In terms of assembly, interacts with Incenp and Cdc37. Requires Mg(2+) as cofactor.

Its subcellular location is the chromosome. The protein resides in the cytoplasm. The protein localises to the cytoskeleton. It is found in the midbody. The catalysed reaction is L-seryl-[protein] + ATP = O-phospho-L-seryl-[protein] + ADP + H(+). It catalyses the reaction L-threonyl-[protein] + ATP = O-phospho-L-threonyl-[protein] + ADP + H(+). Functionally, serine/threonine-protein kinase that mediates both meiotic and mitotic chromosome segregation. Required for histone H3 'Ser-10' phosphorylation. Phosphorylates mei-S332 within residues 124-126 and stabilizes its association with centromeres during meiosis. May regulate the function of the ESCRT-III complex core component shrb during abscission of germline cells in oogenesis. In Drosophila melanogaster (Fruit fly), this protein is Aurora kinase B.